The primary structure comprises 481 residues: Autolysin (481 aa).

Positions 7-142 (KNEFIERLKT…LQDDNMLMIS (136 aa)) constitute a Peptidase C51 domain. The 126-residue stretch at 198-323 (SNPKGIVIHN…NEFTSTSCPH (126 aa)) folds into the N-acetylmuramoyl-L-alanine amidase domain. Residues 398–466 (EESARFTNGN…YLPIRTWNGS (69 aa)) form the SH3b domain.

This sequence belongs to the N-acetylmuramoyl-L-alanine amidase 2 family.

It localises to the secreted. It carries out the reaction Hydrolyzes the link between N-acetylmuramoyl residues and L-amino acid residues in certain cell-wall glycopeptides.. Functionally, autolysins are involved in some important biological processes such as cell separation, cell-wall turnover, competence for genetic transformation, formation of the flagella and sporulation. Autolysin strictly depends on the presence of choline-containing cell walls for activity. This chain is Autolysin (lytA), found in Staphylococcus aureus.